Consider the following 149-residue polypeptide: D-aminoacyl-tRNA deacylase (149 aa).

Positions 137–138 match the Gly-cisPro motif, important for rejection of L-amino acids motif; that stretch reads GP.

This sequence belongs to the DTD family. In terms of assembly, homodimer.

Its subcellular location is the cytoplasm. It carries out the reaction glycyl-tRNA(Ala) + H2O = tRNA(Ala) + glycine + H(+). The enzyme catalyses a D-aminoacyl-tRNA + H2O = a tRNA + a D-alpha-amino acid + H(+). Its function is as follows. An aminoacyl-tRNA editing enzyme that deacylates mischarged D-aminoacyl-tRNAs. Also deacylates mischarged glycyl-tRNA(Ala), protecting cells against glycine mischarging by AlaRS. Acts via tRNA-based rather than protein-based catalysis; rejects L-amino acids rather than detecting D-amino acids in the active site. By recycling D-aminoacyl-tRNA to D-amino acids and free tRNA molecules, this enzyme counteracts the toxicity associated with the formation of D-aminoacyl-tRNA entities in vivo and helps enforce protein L-homochirality. The chain is D-aminoacyl-tRNA deacylase from Leuconostoc mesenteroides subsp. mesenteroides (strain ATCC 8293 / DSM 20343 / BCRC 11652 / CCM 1803 / JCM 6124 / NCDO 523 / NBRC 100496 / NCIMB 8023 / NCTC 12954 / NRRL B-1118 / 37Y).